The sequence spans 23 residues: Pseudin-3 (23 aa).

As to expression, expressed by the skin glands.

It localises to the secreted. In terms of biological role, possesses antifungal activity against C.albicans and is also active against E.coli and S.aureus. The sequence is that of Pseudin-3 from Pseudis paradoxa (Paradoxical frog).